The primary structure comprises 255 residues: Small ribosomal subunit protein uS3c (255 aa).

The region spanning 51-124 is the KH type-2 domain; sequence IRESSNTSYG…NKNQNKNTGQ (74 aa). Residues 96 to 121 are disordered; it reads EKNRDKNKSNKNSALDQSVNKNQNKN. The span at 108 to 121 shows a compositional bias: polar residues; it reads SALDQSVNKNQNKN.

This sequence belongs to the universal ribosomal protein uS3 family. As to quaternary structure, part of the 30S ribosomal subunit.

The protein resides in the plastid. The protein localises to the chloroplast. The protein is Small ribosomal subunit protein uS3c (rps3) of Chaetosphaeridium globosum (Charophycean green alga).